A 200-amino-acid polypeptide reads, in one-letter code: Putative 3-methyladenine DNA glycosylase (200 aa).

Belongs to the DNA glycosylase MPG family.

The protein is Putative 3-methyladenine DNA glycosylase of Bradyrhizobium diazoefficiens (strain JCM 10833 / BCRC 13528 / IAM 13628 / NBRC 14792 / USDA 110).